A 170-amino-acid chain; its full sequence is Peptidyl-prolyl cis-trans isomerase ESS1 (170 aa).

A WW domain is found at 9–43; it reads TGLPTPWTVRYSKSKKREYFFNPETKHSQWEEPEG. The interval 30-53 is disordered; sequence NPETKHSQWEEPEGTNKDQLHKHL. Residues 32-53 show a composition bias toward basic and acidic residues; sequence ETKHSQWEEPEGTNKDQLHKHL. The 114-residue stretch at 57–170 folds into the PpiC domain; that stretch reads PVRVRCLHIL…SGVHVIKRVG (114 aa). Phosphoserine is present on Ser-161.

Belongs to the PpiC/parvulin rotamase family. As to quaternary structure, interacts with the RNA polymerase II largest subunit (RPB1) and with the SIN1-RDP3 HDAC subunit SIN3.

The protein localises to the cytoplasm. It localises to the nucleus. It catalyses the reaction [protein]-peptidylproline (omega=180) = [protein]-peptidylproline (omega=0). Its activity is regulated as follows. Inhibited by 5-hydroxy-1,4-naphthoquinone (juglone), but not by FK506 or cyclosporin A. Functionally, essential PPIase specific for phosphoserine and phosphothreonine N-terminal to the proline residue. Required for efficient pre-mRNA 3'-end processing and transcription termination, probably by inducing conformational changes by proline-directed isomerization in the C-terminal domain (CTD) of RPB1, thereby altering cofactor binding with the RNA polymerase II transcription complex. Also targets the SIN3-RPD3 histone deacetylase complex (HDAC). This chain is Peptidyl-prolyl cis-trans isomerase ESS1 (ESS1), found in Saccharomyces cerevisiae (strain ATCC 204508 / S288c) (Baker's yeast).